A 357-amino-acid polypeptide reads, in one-letter code: Isopentenyl-diphosphate delta-isomerase (357 aa).

Residue 12–13 (RK) participates in substrate binding. FMN contacts are provided by residues Ser-70, 71–73 (SMT), Ser-101, and Asn-130. Substrate is bound at residue 101–103 (SMR). Position 165 (Gln-165) interacts with substrate. Glu-166 serves as a coordination point for Mg(2+). Residues Lys-197, 289-291 (GIR), and 310-311 (AQ) contribute to the FMN site.

It belongs to the IPP isomerase type 2 family. As to quaternary structure, homooctamer. Dimer of tetramers. Requires FMN as cofactor. NADPH is required as a cofactor. The cofactor is Mg(2+).

The protein resides in the cytoplasm. It carries out the reaction isopentenyl diphosphate = dimethylallyl diphosphate. Involved in the biosynthesis of isoprenoids. Catalyzes the 1,3-allylic rearrangement of the homoallylic substrate isopentenyl (IPP) to its allylic isomer, dimethylallyl diphosphate (DMAPP). This chain is Isopentenyl-diphosphate delta-isomerase, found in Chlorobaculum parvum (strain DSM 263 / NCIMB 8327) (Chlorobium vibrioforme subsp. thiosulfatophilum).